We begin with the raw amino-acid sequence, 534 residues long: Lariat debranching enzyme (534 aa).

Residues cysteine 8, histidine 10, aspartate 39, and asparagine 84 each contribute to the a divalent metal cation site. The lariat recognition loop stretch occupies residues 124 to 154; the sequence is SGIFKGHDFLRGHHEFPPYTDSTCRSVYHVR. Residues histidine 174, histidine 226, and histidine 228 each coordinate a divalent metal cation. Disordered regions lie at residues 242–275 and 501–534; these read KLGD…PPPS and TETP…AQED.

The protein belongs to the lariat debranching enzyme family. Requires Fe(2+) as cofactor. Zn(2+) serves as cofactor. The cofactor is Mn(2+).

The protein resides in the nucleus. Active in presence of diverse metals including Fe(2+), Zn(2+), Mn(2+). Binds two metal cations in two adjacent alpha and beta metal-binding pockets. Its function is as follows. Cleaves the 2'-5' phosphodiester linkage at the branch point of lariat intron pre-mRNAs after splicing and converts them into linear molecules that are subsequently degraded. It thereby facilitates ribonucleotide turnover. This is Lariat debranching enzyme (ldbr) from Drosophila melanogaster (Fruit fly).